A 400-amino-acid chain; its full sequence is Serine/threonine transporter SstT (400 aa).

9 consecutive transmembrane segments (helical) span residues 9–29, 36–56, 75–95, 134–154, 175–195, 209–229, 281–301, 323–343, and 349–369; these read LVTQIAIAVVIGIVLAAVWPA, ILGSLFISALKAVAPVLVFVL, VLVLYAVGTLAAATVGVVASM, ALLEANYIGILAWAIALGLAL, VIQLVIRLAPLGILGLVASTF, LLAVLLGCMLFVALVVNPLIV, IAIPLGATINMAGAAITISVL, VVASLCACGASGVAGGSLLLI, and LFGIGNDVAMQVVAIGFIIGI.

It belongs to the dicarboxylate/amino acid:cation symporter (DAACS) (TC 2.A.23) family.

It localises to the cell inner membrane. The catalysed reaction is L-serine(in) + Na(+)(in) = L-serine(out) + Na(+)(out). The enzyme catalyses L-threonine(in) + Na(+)(in) = L-threonine(out) + Na(+)(out). Its function is as follows. Involved in the import of serine and threonine into the cell, with the concomitant import of sodium (symport system). The sequence is that of Serine/threonine transporter SstT from Acidovorax sp. (strain JS42).